The following is a 472-amino-acid chain: Dihydrolipoyl dehydrogenase 2 (472 aa).

Residues 39 to 47 (ERDAYGGTC), K56, and A118 contribute to the FAD site. C47 and C52 are oxidised to a cystine. Residues 186 to 190 (GAGYI), E209, and 275 to 278 (AVGR) each bind NAD(+). FAD is bound by residues D318 and A326. H450 functions as the Proton acceptor in the catalytic mechanism.

The protein belongs to the class-I pyridine nucleotide-disulfide oxidoreductase family. As to quaternary structure, homodimer. It depends on FAD as a cofactor.

It localises to the cytoplasm. The enzyme catalyses N(6)-[(R)-dihydrolipoyl]-L-lysyl-[protein] + NAD(+) = N(6)-[(R)-lipoyl]-L-lysyl-[protein] + NADH + H(+). This is Dihydrolipoyl dehydrogenase 2 (lpdA2) from Haloarcula marismortui (strain ATCC 43049 / DSM 3752 / JCM 8966 / VKM B-1809) (Halobacterium marismortui).